The following is a 513-amino-acid chain: OTU domain-containing protein 5-A (513 aa).

Disordered stretches follow at residues 1–75 (MTIL…GGAG) and 99–136 (GPGH…DEYE). In terms of domain architecture, OTU spans 166 to 289 (FIIKQMKEDG…NIHYNSVVNP (124 aa)). The segment at 171 to 177 (MKEDGAC) is cys-loop. The active site involves D174. The active-site Nucleophile is C177. A variable-loop region spans residues 226-236 (KRKNNCHGNHI). Positions 277-282 (YHRNIH) are his-loop. H282 is an active-site residue. The disordered stretch occupies residues 387 to 446 (LEEWSGRSPRQRSTAGSPEHPDLHAELCMKPPSPGAPLILGKPPSPCAPGPSNQMSTGAD).

It belongs to the peptidase C85 family.

It carries out the reaction Thiol-dependent hydrolysis of ester, thioester, amide, peptide and isopeptide bonds formed by the C-terminal Gly of ubiquitin (a 76-residue protein attached to proteins as an intracellular targeting signal).. In terms of biological role, deubiquitinating enzyme that may function as negative regulator of the innate immune system. Has peptidase activity towards 'Lys-48'- and 'Lys-63'-linked polyubiquitin chains. Can also cleave 'Lys-11'-linked ubiquitin chains (in vitro). This is OTU domain-containing protein 5-A (otud5-a) from Xenopus laevis (African clawed frog).